Reading from the N-terminus, the 605-residue chain is ATP-dependent RNA helicase dbp9 (605 aa).

Residues 1 to 30 form a disordered region; the sequence is MKRKLDANDVPSPEAADKKEKKEEDDADFE. Residues 15–24 are compositionally biased toward basic and acidic residues; the sequence is AADKKEKKEE. The Q motif motif lies at 27 to 55; the sequence is ADFESLNLDPRLRQALIKEKFTKPTLVQA. The 179-residue stretch at 58 to 236 folds into the Helicase ATP-binding domain; sequence IPLALEGKDI…GLFCRSPVTL (179 aa). Residue 71 to 78 participates in ATP binding; sequence AKTGSGKT. Residues 184-187 carry the DEAD box motif; the sequence is DEAD. Residues 247–469 form the Helicase C-terminal domain; sequence GVSQFVVRCA…EVKPYHFEMK (223 aa). Disordered regions lie at residues 339 to 373 and 564 to 605; these read ARKS…VSGK and RKQN…RGRK. Residues 350–361 are compositionally biased toward acidic residues; it reads EAGSSDEDEGEP. Positions 572-591 are enriched in basic residues; sequence RKAREKNRGKGNGRKFAGVK.

The protein belongs to the DEAD box helicase family. DDX56/DBP9 subfamily.

Its subcellular location is the nucleus. The protein resides in the nucleolus. The enzyme catalyses ATP + H2O = ADP + phosphate + H(+). In terms of biological role, ATP-binding RNA helicase involved in the biogenesis of 60S ribosomal subunits and is required for the normal formation of 25S and 5.8S rRNAs. The protein is ATP-dependent RNA helicase dbp9 (dbp9) of Aspergillus oryzae (strain ATCC 42149 / RIB 40) (Yellow koji mold).